The chain runs to 302 residues: Sulfate adenylyltransferase subunit 2 (302 aa).

Positions R280–F302 are disordered.

The protein belongs to the PAPS reductase family. CysD subfamily. Heterodimer composed of CysD, the smaller subunit, and CysN.

It catalyses the reaction sulfate + ATP + H(+) = adenosine 5'-phosphosulfate + diphosphate. Its pathway is sulfur metabolism; hydrogen sulfide biosynthesis; sulfite from sulfate: step 1/3. Its function is as follows. With CysN forms the ATP sulfurylase (ATPS) that catalyzes the adenylation of sulfate producing adenosine 5'-phosphosulfate (APS) and diphosphate, the first enzymatic step in sulfur assimilation pathway. APS synthesis involves the formation of a high-energy phosphoric-sulfuric acid anhydride bond driven by GTP hydrolysis by CysN coupled to ATP hydrolysis by CysD. This is Sulfate adenylyltransferase subunit 2 from Shewanella putrefaciens (strain CN-32 / ATCC BAA-453).